The sequence spans 426 residues: Gamma-glutamyl phosphate reductase (426 aa).

The protein belongs to the gamma-glutamyl phosphate reductase family.

Its subcellular location is the cytoplasm. It carries out the reaction L-glutamate 5-semialdehyde + phosphate + NADP(+) = L-glutamyl 5-phosphate + NADPH + H(+). It functions in the pathway amino-acid biosynthesis; L-proline biosynthesis; L-glutamate 5-semialdehyde from L-glutamate: step 2/2. Its function is as follows. Catalyzes the NADPH-dependent reduction of L-glutamate 5-phosphate into L-glutamate 5-semialdehyde and phosphate. The product spontaneously undergoes cyclization to form 1-pyrroline-5-carboxylate. This Delftia acidovorans (strain DSM 14801 / SPH-1) protein is Gamma-glutamyl phosphate reductase.